Here is a 142-residue protein sequence, read N- to C-terminus: Transcription antitermination protein NusB (142 aa).

This sequence belongs to the NusB family.

Its function is as follows. Involved in transcription antitermination. Required for transcription of ribosomal RNA (rRNA) genes. Binds specifically to the boxA antiterminator sequence of the ribosomal RNA (rrn) operons. The chain is Transcription antitermination protein NusB from Persephonella marina (strain DSM 14350 / EX-H1).